The primary structure comprises 285 residues: Polyamine aminopropyltransferase (285 aa).

Residues 5 to 241 enclose the PABS domain; sequence DTWFTEHFQT…GWWSVTLSSK (237 aa). Glutamine 35 lines the S-methyl-5'-thioadenosine pocket. 2 residues coordinate spermidine: histidine 66 and aspartate 90. Residues aspartate 110 and 141-142 each bind S-methyl-5'-thioadenosine; that span reads DG. The active-site Proton acceptor is aspartate 160. 160–163 is a spermidine binding site; that stretch reads DSTD. Proline 167 contacts S-methyl-5'-thioadenosine.

Belongs to the spermidine/spermine synthase family. As to quaternary structure, homodimer or homotetramer.

The protein localises to the cytoplasm. It catalyses the reaction S-adenosyl 3-(methylsulfanyl)propylamine + putrescine = S-methyl-5'-thioadenosine + spermidine + H(+). Its pathway is amine and polyamine biosynthesis; spermidine biosynthesis; spermidine from putrescine: step 1/1. Functionally, catalyzes the irreversible transfer of a propylamine group from the amino donor S-adenosylmethioninamine (decarboxy-AdoMet) to putrescine (1,4-diaminobutane) to yield spermidine. The sequence is that of Polyamine aminopropyltransferase from Xylella fastidiosa (strain Temecula1 / ATCC 700964).